Here is a 161-residue protein sequence, read N- to C-terminus: Calmodulin-like protein (161 aa).

4 EF-hand domains span residues glutamate 21–asparagine 56, proline 57–glutamate 92, threonine 93–glutamine 128, and phenylalanine 129–glutamine 161. The Ca(2+) site is built by aspartate 34, aspartate 36, asparagine 38, threonine 40, glutamate 45, aspartate 70, aspartate 72, asparagine 74, glutamine 76, glutamate 81, aspartate 106, aspartate 108, asparagine 110, glutamate 117, aspartate 142, aspartate 144, aspartate 146, glutamate 148, and glutamate 153.

The protein belongs to the calmodulin family.

This protein resembles calmodulin in sequence but possibly resembles troponin C in function. This Caenorhabditis elegans protein is Calmodulin-like protein (cal-1).